A 349-amino-acid polypeptide reads, in one-letter code: L-lactate dehydrogenase (349 aa).

The disordered stretch occupies residues 199–219 (APEGSIIGADGNPTTDASTMF).

This sequence belongs to the LDH2/MDH2 oxidoreductase family.

Its subcellular location is the cytoplasm. It catalyses the reaction (S)-lactate + NAD(+) = pyruvate + NADH + H(+). The protein operates within fermentation; pyruvate fermentation to lactate; (S)-lactate from pyruvate: step 1/1. This Cupriavidus necator (strain ATCC 17699 / DSM 428 / KCTC 22496 / NCIMB 10442 / H16 / Stanier 337) (Ralstonia eutropha) protein is L-lactate dehydrogenase (ldh).